Consider the following 202-residue polypeptide: MIASLRGTVLDIQLDHAVLECAGVGYKVLATPAMLGTLQRGEEARVMTTLVVKEDSMTLYGFTSQDDRDMFHVLQTVSGLGPKLALAALSVMSAGDLAQAIAGEEAARLQKIPGVGKRVAQRLILELKDKVKAFAPAESADLSSAAPAAAGPVVEDVVEALIGLGFTDKMARPVVESVVAEQPDAATPVVLRAALSQLGAKK.

The interval M1–T63 is domain I. The tract at residues S64–L142 is domain II. Positions S143–A148 are flexible linker. The domain III stretch occupies residues A149–K202.

It belongs to the RuvA family. Homotetramer. Forms an RuvA(8)-RuvB(12)-Holliday junction (HJ) complex. HJ DNA is sandwiched between 2 RuvA tetramers; dsDNA enters through RuvA and exits via RuvB. An RuvB hexamer assembles on each DNA strand where it exits the tetramer. Each RuvB hexamer is contacted by two RuvA subunits (via domain III) on 2 adjacent RuvB subunits; this complex drives branch migration. In the full resolvosome a probable DNA-RuvA(4)-RuvB(12)-RuvC(2) complex forms which resolves the HJ.

The protein localises to the cytoplasm. Functionally, the RuvA-RuvB-RuvC complex processes Holliday junction (HJ) DNA during genetic recombination and DNA repair, while the RuvA-RuvB complex plays an important role in the rescue of blocked DNA replication forks via replication fork reversal (RFR). RuvA specifically binds to HJ cruciform DNA, conferring on it an open structure. The RuvB hexamer acts as an ATP-dependent pump, pulling dsDNA into and through the RuvAB complex. HJ branch migration allows RuvC to scan DNA until it finds its consensus sequence, where it cleaves and resolves the cruciform DNA. In Corynebacterium aurimucosum (strain ATCC 700975 / DSM 44827 / CIP 107346 / CN-1) (Corynebacterium nigricans), this protein is Holliday junction branch migration complex subunit RuvA.